The primary structure comprises 113 residues: Ribonuclease P protein component (113 aa).

This sequence belongs to the RnpA family. As to quaternary structure, consists of a catalytic RNA component (M1 or rnpB) and a protein subunit.

The catalysed reaction is Endonucleolytic cleavage of RNA, removing 5'-extranucleotides from tRNA precursor.. Functionally, RNaseP catalyzes the removal of the 5'-leader sequence from pre-tRNA to produce the mature 5'-terminus. It can also cleave other RNA substrates such as 4.5S RNA. The protein component plays an auxiliary but essential role in vivo by binding to the 5'-leader sequence and broadening the substrate specificity of the ribozyme. The polypeptide is Ribonuclease P protein component (Ligilactobacillus salivarius (strain UCC118) (Lactobacillus salivarius)).